Here is a 570-residue protein sequence, read N- to C-terminus: Sulfite reductase [NADPH] hemoprotein beta-component (570 aa).

[4Fe-4S] cluster-binding residues include C434, C440, C479, and C483. C483 lines the siroheme pocket.

It belongs to the nitrite and sulfite reductase 4Fe-4S domain family. Alpha(8)-beta(8). The alpha component is a flavoprotein, the beta component is a hemoprotein. The cofactor is siroheme. It depends on [4Fe-4S] cluster as a cofactor.

It carries out the reaction hydrogen sulfide + 3 NADP(+) + 3 H2O = sulfite + 3 NADPH + 4 H(+). It functions in the pathway sulfur metabolism; hydrogen sulfide biosynthesis; hydrogen sulfide from sulfite (NADPH route): step 1/1. Functionally, component of the sulfite reductase complex that catalyzes the 6-electron reduction of sulfite to sulfide. This is one of several activities required for the biosynthesis of L-cysteine from sulfate. The sequence is that of Sulfite reductase [NADPH] hemoprotein beta-component from Shigella flexneri.